Reading from the N-terminus, the 566-residue chain is Oxygen-dependent choline dehydrogenase (566 aa).

Asp7–Glu36 is an FAD binding site. The disordered stretch occupies residues Gln183–Thr203. The Proton acceptor role is filled by His474.

It belongs to the GMC oxidoreductase family. It depends on FAD as a cofactor.

The catalysed reaction is choline + A = betaine aldehyde + AH2. It catalyses the reaction betaine aldehyde + NAD(+) + H2O = glycine betaine + NADH + 2 H(+). The protein operates within amine and polyamine biosynthesis; betaine biosynthesis via choline pathway; betaine aldehyde from choline (cytochrome c reductase route): step 1/1. Involved in the biosynthesis of the osmoprotectant glycine betaine. Catalyzes the oxidation of choline to betaine aldehyde and betaine aldehyde to glycine betaine at the same rate. The polypeptide is Oxygen-dependent choline dehydrogenase (Burkholderia ambifaria (strain ATCC BAA-244 / DSM 16087 / CCUG 44356 / LMG 19182 / AMMD) (Burkholderia cepacia (strain AMMD))).